Reading from the N-terminus, the 729-residue chain is MAESDFDKTQYIIPNEANINFLECRTAFGGLTEKEKCYAHYLYKASWEGALICLLQTSPEAPGIFLLFQKLFSSESVGSLKEKALKSSVAPTEEEFTSFLTYVAAFYGNIGNYKSFGDTKFIPNLPKEKFQTIVFSSQAYATNAKSVVTLWSDCCEAMYSLKPKLRQLGFGEQGISTYYSSNCNKSDAEFIQGFLKEKNIEGWNTRLFKEINDKGHVTYNLRLASTALSAEDCSAEKKDDVASLVKSYEYQGTTVKITRGDYAGLLKKVVDNLIMAKGFASNENEVAMLDHYVHSFTTGSVEAHKDGSRHWIRDKGPVVETYIGFIESYRDPFGVRAEYEGFVSIVNKSMSAKFADLVSSAETLLPQLPWPSSYEKDTFLRPDFTSLDVLGFGSSGIPAGINIPNYDEIRQDEGFKNVSLGNVLSAHSADQKITFLTEEDAELYSKLKAPSFEVQVGLHELLGHGSGKLFIKKPDGSYNFDHKSVVNTETGEKIQSWYTEGETWSTKFAELSSSYEECRAECVGIYLCLNKDVLRIFGHEGAAGDDIVYVNWLNMVRAGLLGLEFYTPENNKWRQAHMQARYVILRVLLEAGEQLVQLTRIAGSDGKPDILVTLDRNKISCVGQPAIGAFLRKLQVFKSTADYASGKDLYDKYSAVDAHFLEMRNIVLARKTPRRMFVQSHTTIQDGVVSLKEFEASASGMIASFIARFPGDDPVLEKLWRDDLPYHQY.

Residue histidine 459 participates in Zn(2+) binding. Glutamate 460 is an active-site residue. Positions 464 and 517 each coordinate Zn(2+).

The protein belongs to the peptidase M49 family. Requires Zn(2+) as cofactor.

It localises to the cytoplasm. The catalysed reaction is Release of an N-terminal dipeptide from a peptide comprising four or more residues, with broad specificity. Also acts on dipeptidyl 2-naphthylamides.. In Nematostella vectensis (Starlet sea anemone), this protein is Dipeptidyl peptidase 3 (dpp3).